The primary structure comprises 1044 residues: GRB10-interacting GYF protein 1 (1044 aa).

Phosphoserine is present on residues serine 24, serine 28, serine 137, and serine 157. 2 disordered regions span residues 104-290 and 306-424; these read GKGA…DGLP and ASGA…LEDE. 2 stretches are compositionally biased toward basic and acidic residues: residues 148–179 and 186–203; these read NPREIQRSQSWDDRGERRFEKPARRDGVRSGF and PRKEHARSDSENWRSLRE. Serine 228 carries the phosphoserine modification. 2 stretches are compositionally biased toward basic and acidic residues: residues 237–265 and 316–332; these read GWREHGERRRKFDFDLRGERGGCGEEDGR and GPKEAIPEEQELDFRGL. Positions 333-350 are enriched in acidic residues; that stretch reads EEEEEEEEEPSEGVDEER. A Phosphoserine modification is found at serine 343. Over residues 366-379 the composition is skewed to low complexity; sequence NSSSPSSLPALGPL. The segment covering 389-403 has biased composition (basic and acidic residues); sequence AVEKELPPAEGDELR. Phosphoserine is present on serine 408. Positions 476 to 524 constitute a GYF domain; sequence ARKWFYKDPQGEIQGPFTTQEMAEWFQAGYFSMSLLVKRGCDEGFQPLG. Serine 540 and serine 634 each carry phosphoserine. Residues 692 to 706 are compositionally biased toward basic and acidic residues; that stretch reads KREEEERKRREEKRR. 6 disordered regions span residues 692–721, 820–842, 855–883, 966–987, 1000–1019, and 1024–1044; these read KREEEERKRREEKRRQQQQQQEEQKRRQEE, EAGPLWGGPDKSGGSSGGNLGLW, SLGLKSSRSSPSLSDSYSHLSGRPVRKKT, QKASQQRQQQQQQQQQQQQEAW, NHSTKLGPGEGSKAKRRALM, and PSILGYSLHGPSGEIESVDDY. Over residues 829-839 the composition is skewed to gly residues; that stretch reads DKSGGSSGGNL. Composition is skewed to low complexity over residues 855 to 877 and 970 to 984; these read SLGLKSSRSSPSLSDSYSHLSGR and QQRQQQQQQQQQQQQ. Serine 863 carries the phosphoserine modification.

The protein belongs to the GIGYF family. In terms of assembly, interacts with GRB10. This transient binding is increased under IGF1 stimulation and leads to recruitment of GIGYF1/GRB10 complex to IGF1 receptor. Interacts with DDX6. As to expression, ubiquitous. Lower expression in skeletal muscle, liver and testis.

May act cooperatively with GRB10 to regulate tyrosine kinase receptor signaling. May increase IGF1 receptor phosphorylation under IGF1 stimulation as well as phosphorylation of IRS1 and SHC1. The polypeptide is GRB10-interacting GYF protein 1 (Gigyf1) (Mus musculus (Mouse)).